The primary structure comprises 281 residues: Transcription factor bHLH79 (281 aa).

Residues 47 to 167 (FTRSEHSGNK…GQATDRHSLA (121 aa)) are disordered. Composition is skewed to basic and acidic residues over residues 77 to 88 (KTRDLNSEDDSS) and 138 to 152 (TEQK…DYIH). In terms of domain architecture, bHLH spans 159–209 (QATDRHSLAERARREKISEKMTALQDIIPGCNKIIGKALVLDEIINYIQSL).

As to quaternary structure, homodimer.

The protein resides in the nucleus. The chain is Transcription factor bHLH79 (BHLH79) from Arabidopsis thaliana (Mouse-ear cress).